Consider the following 193-residue polypeptide: MTRMLIVGPPGSGKGTQAEWISDRLGIVAISTGDIFRANVKGETPLGLEAKKYMDAGDYVPDSVTNKMVRDRLQQEDVQHGFLLDGYPRTSAQVNELDDILSAGGEKLDVVLQLTADDEELVRRLLGRAKESGRSDDDEKVIRHRLNLYHTQTEAVVVRYQKLGLLAKVDGIGAIDEVTDRIMAAIDGVRAAK.

Residue 11 to 16 coordinates ATP; that stretch reads GSGKGT. The interval 31 to 60 is NMP; that stretch reads STGDIFRANVKGETPLGLEAKKYMDAGDYV. Residues T32, R37, 58–60, 86–89, and Q93 contribute to the AMP site; these read DYV and GYPR. The LID stretch occupies residues 127-137; the sequence is GRAKESGRSDD. R128 serves as a coordination point for ATP. AMP-binding residues include R134 and R145. G173 is an ATP binding site.

The protein belongs to the adenylate kinase family. Monomer.

It localises to the cytoplasm. The catalysed reaction is AMP + ATP = 2 ADP. Its pathway is purine metabolism; AMP biosynthesis via salvage pathway; AMP from ADP: step 1/1. Functionally, catalyzes the reversible transfer of the terminal phosphate group between ATP and AMP. Plays an important role in cellular energy homeostasis and in adenine nucleotide metabolism. This chain is Adenylate kinase, found in Renibacterium salmoninarum (strain ATCC 33209 / DSM 20767 / JCM 11484 / NBRC 15589 / NCIMB 2235).